Consider the following 299-residue polypeptide: Farnesyl diphosphate synthase (299 aa).

Isopentenyl diphosphate is bound by residues lysine 45, arginine 48, and histidine 77. The Mg(2+) site is built by aspartate 84 and aspartate 90. Residue arginine 95 participates in (2E)-geranyl diphosphate binding. An isopentenyl diphosphate-binding site is contributed by arginine 96. 4 residues coordinate (2E)-geranyl diphosphate: lysine 181, threonine 182, glutamine 220, and lysine 237.

It belongs to the FPP/GGPP synthase family. Requires Mg(2+) as cofactor.

Its subcellular location is the cytoplasm. It catalyses the reaction isopentenyl diphosphate + (2E)-geranyl diphosphate = (2E,6E)-farnesyl diphosphate + diphosphate. The polypeptide is Farnesyl diphosphate synthase (ispA) (Escherichia coli (strain K12)).